The following is a 632-amino-acid chain: Pentatricopeptide repeat-containing protein ELI1, chloroplastic (632 aa).

The N-terminal 19 residues, 1-19, are a transit peptide targeting the chloroplast; the sequence is MASSPLLATSLPQNQLSTT. 10 PPR repeats span residues 94–128, 129–159, 160–194, 196–221, 222–256, 258–292, 293–323, 324–354, 360–395, and 396–426; these read DLFLFTAAINTASINGLKDQAFLLYVQLLSSEINP, NEFTFSSLLKSCSTKSGKLIHTHVLKFGLGI, DPYVATGLVDVYAKGGDVVSAQKVFDRMPERSLVS, TAMITCYAKQGNVEAARALFDSMCER, DIVSWNVMIDGYAQHGFPNDALMLFQKLLAEGKPK, DEITVVAALSACSQIGALETGRWIHVFVKSSRIRL, NVKVCTGLIDMYSKCGSLEEAVLVFNDTPRK, DIVAWNAMIAGYAMHGYSQDALRLFNEMQGI, TDITFIGTLQACAHAGLVNEGIRIFESMGQEYGIKP, and KIEHYGCLVSLLGRAGQLKRAYETIKNMNMD. The segment at 431-506 is type E motif; sequence LWSSVLGSCK…EPGISTIEIE (76 aa). Positions 497 to 512 are required for function in RNA editing; sequence EPGISTIEIENKVHEF. Residues 507–537 are type E(+) motif; that stretch reads NKVHEFRAGDREHSKSKEIYTMLRKISERIK. The tract at residues 538–632 is type DYW motif; it reads SHGYVPNTNT…DGSCSCGDFW (95 aa).

The protein belongs to the PPR family. PCMP-H subfamily. Zn(2+) is required as a cofactor.

Its subcellular location is the plastid. The protein localises to the chloroplast. Functionally, plays a major role in single RNA editing events in chloroplasts. Acts as a site-recognition transacting factor involved in the edition of the site 5 of ndhB1 and ndhB2 (ndhB1-5 and ndhB2-5 sites corresponding to cytidine-830), which are plastid-encoded subunits of the NADH-plastoquinone oxidoreductase. May provide the catalytic activity for editing site conversion. The polypeptide is Pentatricopeptide repeat-containing protein ELI1, chloroplastic (Arabidopsis thaliana (Mouse-ear cress)).